Consider the following 122-residue polypeptide: Small ribosomal subunit protein uS13 (122 aa).

The interval 99–122 is disordered; the sequence is RGQRTHTNARTRKGPAKAIAGKKK.

It belongs to the universal ribosomal protein uS13 family. As to quaternary structure, part of the 30S ribosomal subunit. Forms a loose heterodimer with protein S19. Forms two bridges to the 50S subunit in the 70S ribosome.

Functionally, located at the top of the head of the 30S subunit, it contacts several helices of the 16S rRNA. In the 70S ribosome it contacts the 23S rRNA (bridge B1a) and protein L5 of the 50S subunit (bridge B1b), connecting the 2 subunits; these bridges are implicated in subunit movement. Contacts the tRNAs in the A and P-sites. This Parvibaculum lavamentivorans (strain DS-1 / DSM 13023 / NCIMB 13966) protein is Small ribosomal subunit protein uS13.